The following is a 507-amino-acid chain: ATP synthase subunit alpha 2 (507 aa).

Residue 171-178 participates in ATP binding; the sequence is GDRATGKT.

This sequence belongs to the ATPase alpha/beta chains family. F-type ATPases have 2 components, CF(1) - the catalytic core - and CF(0) - the membrane proton channel. CF(1) has five subunits: alpha(3), beta(3), gamma(1), delta(1), epsilon(1). CF(0) has three main subunits: a(1), b(2) and c(9-12). The alpha and beta chains form an alternating ring which encloses part of the gamma chain. CF(1) is attached to CF(0) by a central stalk formed by the gamma and epsilon chains, while a peripheral stalk is formed by the delta and b chains.

The protein localises to the cell inner membrane. The catalysed reaction is ATP + H2O + 4 H(+)(in) = ADP + phosphate + 5 H(+)(out). Functionally, produces ATP from ADP in the presence of a proton gradient across the membrane. The alpha chain is a regulatory subunit. In Gluconobacter oxydans (strain 621H) (Gluconobacter suboxydans), this protein is ATP synthase subunit alpha 2.